Consider the following 36-residue polypeptide: Cytochrome b6-f complex subunit 5 (36 aa).

A helical transmembrane segment spans residues Leu5–Ala25.

Belongs to the PetG family. The 4 large subunits of the cytochrome b6-f complex are cytochrome b6, subunit IV (17 kDa polypeptide, PetD), cytochrome f and the Rieske protein, while the 4 small subunits are PetG, PetL, PetM and PetN. The complex functions as a dimer.

It localises to the cellular thylakoid membrane. Its function is as follows. Component of the cytochrome b6-f complex, which mediates electron transfer between photosystem II (PSII) and photosystem I (PSI), cyclic electron flow around PSI, and state transitions. PetG is required for either the stability or assembly of the cytochrome b6-f complex. The sequence is that of Cytochrome b6-f complex subunit 5 from Acaryochloris marina (strain MBIC 11017).